Consider the following 57-residue polypeptide: Large ribosomal subunit protein bL32 (57 aa).

Basic residues predominate over residues 1 to 19; the sequence is MATPKRRMSRANTRSRRAQ. The disordered stretch occupies residues 1–20; the sequence is MATPKRRMSRANTRSRRAQW.

It belongs to the bacterial ribosomal protein bL32 family.

The polypeptide is Large ribosomal subunit protein bL32 (Mycobacterium leprae (strain Br4923)).